A 721-amino-acid polypeptide reads, in one-letter code: Methionine--tRNA ligase (721 aa).

The 'HIGH' region signature appears at 27-37 (PYANGQIHIGH). Zn(2+)-binding residues include Cys-158, Cys-161, Cys-171, and Cys-174. A 'KMSKS' region motif is present at residues 348–352 (KMSKS). Lys-351 is a binding site for ATP. Positions 615–721 (DFAKIDLRIA…SGAKPGMRVK (107 aa)) constitute a tRNA-binding domain.

The protein belongs to the class-I aminoacyl-tRNA synthetase family. MetG type 1 subfamily. As to quaternary structure, homodimer. The cofactor is Zn(2+).

It localises to the cytoplasm. It catalyses the reaction tRNA(Met) + L-methionine + ATP = L-methionyl-tRNA(Met) + AMP + diphosphate. Its function is as follows. Is required not only for elongation of protein synthesis but also for the initiation of all mRNA translation through initiator tRNA(fMet) aminoacylation. The protein is Methionine--tRNA ligase of Burkholderia vietnamiensis (strain G4 / LMG 22486) (Burkholderia cepacia (strain R1808)).